A 193-amino-acid polypeptide reads, in one-letter code: Bcl-2-like protein 2 (193 aa).

Position 2 is an N-acetylalanine (A2). The short motif at 9–29 is the BH4 element; sequence DTRALVADFVGYKLRQKGYVC. The short motif at 85-104 is the BH1 element; it reads ELFQGGPNWGRLVAFFVFGA. A BH2 motif is present at residues 136 to 151; sequence DWIHSSGGWAEFTALY.

This sequence belongs to the Bcl-2 family. As to quaternary structure, interacts with HIF3A isoform 2 (via C-terminus domain). Interacts with BOP. In terms of tissue distribution, expressed in almost all myeloid cell lines and in a wide range of tissues, with highest levels in brain, colon, and salivary gland.

The protein resides in the mitochondrion membrane. Its function is as follows. Promotes cell survival. Blocks dexamethasone-induced apoptosis. Mediates survival of postmitotic Sertoli cells by suppressing death-promoting activity of BAX. The protein is Bcl-2-like protein 2 (Bcl2l2) of Mus musculus (Mouse).